Reading from the N-terminus, the 487-residue chain is Acetylcholine receptor subunit beta-type acr-3 (487 aa).

The first 20 residues, 1–20 (MQKIWLFSIITIFLITELQC), serve as a signal peptide directing secretion. Residues 21–231 (YPNSAEERLL…KIRRKALFYT (211 aa)) are Extracellular-facing. Residue asparagine 46 is glycosylated (N-linked (GlcNAc...) asparagine). The cysteines at positions 151 and 165 are disulfide-linked. The next 3 membrane-spanning stretches (helical) occupy residues 232-252 (VILI…FYLP), 259-279 (ITLA…VSKI), and 294-314 (LLMT…IINV). The Cytoplasmic segment spans residues 315–439 (YFRGPATHIM…WKFVSVVIDR (125 aa)). A disordered region spans residues 380–400 (ISEQPKQTSRKDGSSSEEKLS). The chain crosses the membrane as a helical span at residues 440–460 (LLLYLFFAVTTGGTVGILLSA).

Belongs to the ligand-gated ion channel (TC 1.A.9) family. Acetylcholine receptor (TC 1.A.9.1) subfamily. As to quaternary structure, component of nicotinic acetylcholine receptor. In cholinergic motoneurons, composed of 2 non-alpha subunits acr-2 and acr-3, and 3 alpha subunits unc-38, unc-63 and acr-12.

The protein localises to the postsynaptic cell membrane. The protein resides in the cell membrane. Its function is as follows. Non-alpha subunit of nicotinic acetylcholine receptor (nAChR). Probably acts in cholinergic motoneurons to regulate presynaptic neurotransmitter release, thereby ensuring normal level of excitation of cholinergic motoneurons during locomotion. The chain is Acetylcholine receptor subunit beta-type acr-3 (acr-3) from Caenorhabditis elegans.